Reading from the N-terminus, the 421-residue chain is Phosphatidylinositol 5-phosphate 4-kinase type-2 gamma (421 aa).

Ala-2 carries the post-translational modification N-acetylalanine. Ser-26 bears the Phosphoserine mark. The PIPK domain maps to 43 to 420; the sequence is AADPLVGVFL…RFLDFIANIF (378 aa). Residues 69–75 are required for interaction with PIP5K1A; it reads VMLLPDD. At Ser-349 the chain carries Phosphoserine.

In terms of assembly, interacts with PIP5K1A; the interaction inhibits PIP5K1A kinase activity. Phosphorylated, phosphorylation is induced by EGF.

The protein resides in the endoplasmic reticulum. The protein localises to the cytoplasm. It carries out the reaction a 1,2-diacyl-sn-glycero-3-phospho-(1D-myo-inositol-5-phosphate) + ATP = a 1,2-diacyl-sn-glycero-3-phospho-(1D-myo-inositol-4,5-bisphosphate) + ADP + H(+). The enzyme catalyses 1,2-dihexadecanoyl-sn-glycero-3-phospho-(1D-myo-inositol-5-phosphate) + ATP = 1,2-dihexadecanoyl-sn-glycero-3-phospho-(1D-myo-inositol-4,5-bisphosphate) + ADP + H(+). It catalyses the reaction 1,2-dihexadecanoyl-sn-glycero-3-phospho-(1D-myo-inositol-5-phosphate) + GTP = 1,2-dihexadecanoyl-sn-glycero-3-phospho-(1D-myo-inositol-4,5-bisphosphate) + GDP + H(+). Its function is as follows. Phosphatidylinositol 5-phosphate 4-kinase with low enzymatic activity. May be a GTP sensor, has higher GTP-dependent kinase activity than ATP-dependent kinase activity. PIP4Ks negatively regulate insulin signaling through a catalytic-independent mechanism. They interact with PIP5Ks and suppress PIP5K-mediated PtdIns(4,5)P2 synthesis and insulin-dependent conversion to PtdIns(3,4,5)P3. This is Phosphatidylinositol 5-phosphate 4-kinase type-2 gamma from Mus musculus (Mouse).